We begin with the raw amino-acid sequence, 249 residues long: Cytokine-inducible SH2-containing protein (249 aa).

The interval Ala41–Asp64 is disordered. An SH2 domain is found at Trp84–Tyr165. The SOCS box domain occupies Lys200–Gln248.

The protein operates within protein modification; protein ubiquitination. SOCS family proteins form part of a classical negative feedback system that regulates cytokine signal transduction. CIS is involved in the negative regulation of cytokines that signal through the JAK-STAT5 pathway such as erythropoietin, prolactin and interleukin 3 (IL3) receptor. Inhibits STAT5 trans-activation by suppressing its tyrosine phosphorylation. May be a substrate-recognition component of a SCF-like ECS (Elongin BC-CUL2/5-SOCS-box protein) E3 ubiquitin-protein ligase complex which mediates the ubiquitination and subsequent proteasomal degradation of target proteins. The sequence is that of Cytokine-inducible SH2-containing protein (CISH) from Gallus gallus (Chicken).